Consider the following 195-residue polypeptide: Nascent polypeptide-associated complex subunit alpha (195 aa).

Disordered regions lie at residues 1-59 (MTGS…SRSE) and 132-153 (TREA…EEDS). Residues 7-16 (TRQKEVKEPQ) show a composition bias toward basic and acidic residues. Acidic residues predominate over residues 19 to 33 (VSDDSDNEAVEQELT). A compositionally biased stretch (basic and acidic residues) spans 47 to 59 (DHIDKQAKQSRSE). The NAC-A/B domain occupies 56–121 (SRSEKKARKL…AKIEDLTQHA (66 aa)). Positions 142-153 (EEDENEDVEEDS) are enriched in acidic residues.

Belongs to the NAC-alpha family. In terms of assembly, may be part of the nascent polypeptide-associated complex (NAC), which is a heterodimer of icd-2 and icd-1 (via NAC-A/B domains).

The protein localises to the cytoplasm. May prevent inappropriate targeting of non-secretory polypeptides to the endoplasmic reticulum (ER). Plays a role in the response to heat stress. In Caenorhabditis elegans, this protein is Nascent polypeptide-associated complex subunit alpha.